The sequence spans 633 residues: Phosphomethylpyrimidine synthase (633 aa).

Substrate contacts are provided by residues Asn-245, Met-274, Tyr-303, His-339, 359-361 (SRG), 400-403 (DGLR), and Glu-439. A Zn(2+)-binding site is contributed by His-443. Tyr-466 is a substrate binding site. Residue His-507 coordinates Zn(2+). The [4Fe-4S] cluster site is built by Cys-587, Cys-590, and Cys-595.

This sequence belongs to the ThiC family. Homodimer. [4Fe-4S] cluster is required as a cofactor.

The catalysed reaction is 5-amino-1-(5-phospho-beta-D-ribosyl)imidazole + S-adenosyl-L-methionine = 4-amino-2-methyl-5-(phosphooxymethyl)pyrimidine + CO + 5'-deoxyadenosine + formate + L-methionine + 3 H(+). It participates in cofactor biosynthesis; thiamine diphosphate biosynthesis. Functionally, catalyzes the synthesis of the hydroxymethylpyrimidine phosphate (HMP-P) moiety of thiamine from aminoimidazole ribotide (AIR) in a radical S-adenosyl-L-methionine (SAM)-dependent reaction. The polypeptide is Phosphomethylpyrimidine synthase (Neisseria meningitidis serogroup A / serotype 4A (strain DSM 15465 / Z2491)).